Consider the following 533-residue polypeptide: Beta-1,4-mannosyl-glycoprotein 4-beta-N-acetylglucosaminyltransferase (533 aa).

The Cytoplasmic segment spans residues 1-7 (MKMRRYK). A helical; Signal-anchor for type II membrane protein transmembrane segment spans residues 8–23 (LFLMFCMAGLCLISFL). The Lumenal portion of the chain corresponds to 24–533 (HFFKTLSYVT…ARGKLDEAEV (510 aa)). Residues 119-158 (KPGTKMLERPPPGRPEEKPEGANGSSARRPPRYLLSARER) form a disordered region. Asn141, Asn241, Asn259, and Asn397 each carry an N-linked (GlcNAc...) asparagine glycan. Positions 507–533 (STAAGGWRHRGPEGRPPARGKLDEAEV) are disordered.

The protein belongs to the glycosyltransferase 17 family. In terms of assembly, interacts with MGAT4D.

Its subcellular location is the golgi apparatus membrane. It carries out the reaction N(4)-{beta-D-GlcNAc-(1-&gt;2)-alpha-D-Man-(1-&gt;3)-[beta-D-GlcNAc-(1-&gt;2)-alpha-D-Man-(1-&gt;6)]-beta-D-Man-(1-&gt;4)-beta-D-GlcNAc-(1-&gt;4)-beta-D-GlcNAc}-L-asparaginyl-[protein] + UDP-N-acetyl-alpha-D-glucosamine = N(4)-{beta-D-GlcNAc-(1-&gt;2)-alpha-D-Man-(1-&gt;3)-[beta-D-GlcNAc-(1-&gt;4)]-[beta-D-GlcNAc-(1-&gt;2)-alpha-D-Man-(1-&gt;6)]-beta-D-Man-(1-&gt;4)-beta-D-GlcNAc-(1-&gt;4)-beta-D-GlcNAc}-L-asparaginyl-[protein] + UDP + H(+). It participates in protein modification; protein glycosylation. Its function is as follows. It is involved in the regulation of the biosynthesis and biological function of glycoprotein oligosaccharides. Catalyzes the addition of N-acetylglucosamine in beta 1-4 linkage to the beta-linked mannose of the trimannosyl core of N-linked sugar chains, called bisecting N-acetylglucosamine (GlcNAc). It is one of the most important enzymes involved in the regulation of the biosynthesis of glycoprotein oligosaccharides. The addition of this bisecting GlcNAc residue alters not only the composition, but also the conformation of the N-glycan. The introduction of the bisecting GlcNAc residue results in the suppression of further processing and elongation of N-glycans, precluding the formation of beta-1,6 GlcNAc branching, catalyzed by MGAT5 since it is unable to use the bisected oligosaccharide as a substrate. Addition of bisecting N-acetylglucosamine to CDH1/E-cadherin modulates CDH1 cell membrane location. Inhibits NeuAc-alpha-2,3-Gal-beta-1,4-GlcNAc- formation which modulates sialylation levels and plays a role in cell migration regulation. In brain, addition of bisecting N-acetylglucosamine to BACE1 blocks its lysosomal targeting in response to oxidative stress and further degradation which increases its location to early endosome and the APP cleavage. This is Beta-1,4-mannosyl-glycoprotein 4-beta-N-acetylglucosaminyltransferase from Homo sapiens (Human).